A 586-amino-acid chain; its full sequence is Exopolysaccharide phosphotransferase SCO6023 (586 aa).

It belongs to the stealth family.

In Streptomyces coelicolor (strain ATCC BAA-471 / A3(2) / M145), this protein is Exopolysaccharide phosphotransferase SCO6023.